Here is a 501-residue protein sequence, read N- to C-terminus: Lysine--tRNA ligase (501 aa).

Mg(2+) contacts are provided by glutamate 412 and glutamate 419.

This sequence belongs to the class-II aminoacyl-tRNA synthetase family. In terms of assembly, homodimer. Mg(2+) serves as cofactor.

It is found in the cytoplasm. The catalysed reaction is tRNA(Lys) + L-lysine + ATP = L-lysyl-tRNA(Lys) + AMP + diphosphate. The polypeptide is Lysine--tRNA ligase (Chlorobium luteolum (strain DSM 273 / BCRC 81028 / 2530) (Pelodictyon luteolum)).